The following is a 403-amino-acid chain: Aspartic protease PEP1 (403 aa).

Positions 1 to 20 (MVQISQIGAVLAVCSTLTVA) are cleaved as a signal peptide. A propeptide spans 21 to 67 (APTKGKARFNVPQVAVPMKAVHHPAVAYARALHKFGMKVPKAVSDAA) (activation peptide). A Peptidase A1 domain is found at 82–400 (YVTQVTVGQG…DTEGPRIGFA (319 aa)). Residue D98 is part of the active site. N-linked (GlcNAc...) asparagine glycosylation is found at N159 and N270. Residue D293 is part of the active site. Cysteines 329 and 361 form a disulfide.

This sequence belongs to the peptidase A1 family.

The protein resides in the secreted. The enzyme catalyses Hydrolysis of proteins with broad specificity. Generally favors hydrophobic residues in P1 and P1', but also accepts Lys in P1, which leads to activation of trypsinogen. Does not clot milk.. Its function is as follows. Secreted aspartic endopeptidase that allows assimilation of proteinaceous substrates. Can catalyze hydrolysis of the major structural proteins of basement membrane, elastin, collagen, and laminin. Thought to play a significant role in virulence. The chain is Aspartic protease PEP1 (PEP1) from Arthroderma benhamiae (strain ATCC MYA-4681 / CBS 112371) (Trichophyton mentagrophytes).